Reading from the N-terminus, the 20-residue chain is Pregnancy-associated glycoprotein 55h (20 aa).

Asn-4 carries an N-linked (GlcNAc...) asparagine glycan.

This sequence belongs to the peptidase A1 family. In terms of tissue distribution, highly expressed in the placenta between day 60 and day 100 of gestation.

It localises to the secreted. Its subcellular location is the extracellular space. This is Pregnancy-associated glycoprotein 55h from Ovis aries (Sheep).